A 103-amino-acid chain; its full sequence is Co-chaperonin GroES (103 aa).

Belongs to the GroES chaperonin family. In terms of assembly, heptamer of 7 subunits arranged in a ring. Interacts with the chaperonin GroEL.

The protein resides in the cytoplasm. In terms of biological role, together with the chaperonin GroEL, plays an essential role in assisting protein folding. The GroEL-GroES system forms a nano-cage that allows encapsulation of the non-native substrate proteins and provides a physical environment optimized to promote and accelerate protein folding. GroES binds to the apical surface of the GroEL ring, thereby capping the opening of the GroEL channel. The chain is Co-chaperonin GroES from Gloeothece citriformis (strain PCC 7424) (Cyanothece sp. (strain PCC 7424)).